The following is a 121-amino-acid chain: Protransforming growth factor alpha (121 aa).

Leucine 1 is a signal peptide. Residues 2-16 (ENSTSLLSDPPVAAA) constitute a propeptide, removed in mature form. Topologically, residues 2 to 75 (ENSTSLLSDP…AVVAASQKKQ (74 aa)) are extracellular. An N-linked (GlcNAc...) asparagine glycan is attached at asparagine 3. The 41-residue stretch at 20 to 60 (HFNDCPDSHTQFCFHGTCRFLVQEDRPACVCHSGYVGARCE) folds into the EGF-like domain. 3 cysteine pairs are disulfide-bonded: cysteine 24/cysteine 37, cysteine 32/cysteine 48, and cysteine 50/cysteine 59. Positions 67–121 (VVAASQKKQAITALVVVSIVALAVLIITCVLIHCCQVRKHCEWCRALICRHEKPS) are cleaved as a propeptide — removed in mature form. The chain crosses the membrane as a helical span at residues 76–101 (AITALVVVSIVALAVLIITCVLIHCC).

Interacts with the PDZ domains of MAGI3, SDCBP and SNTA1. The interaction with SDCBP, is required for the targeting to the cell surface. In the endoplasmic reticulum, in its immature form (i.e. with a prosegment and lacking full N-glycosylation), interacts with CNIH. In the Golgi apparatus, may form a complex with CNIH and GORASP2. Interacts (via cytoplasmic C-terminal domain) with NKD2. As to expression, hypothalamus.

Its subcellular location is the secreted. The protein localises to the extracellular space. It is found in the cell membrane. Functionally, TGF alpha is a mitogenic polypeptide that is able to bind to the EGF receptor/EGFR and to act synergistically with TGF beta to promote anchorage-independent cell proliferation in soft agar. In Macaca mulatta (Rhesus macaque), this protein is Protransforming growth factor alpha (TGFA).